Here is a 330-residue protein sequence, read N- to C-terminus: Embigin (330 aa).

The signal sequence occupies residues 1–33 (MRSHTGLRALVAPGYPLLLLCLLAATRPDPAEG). Residues 34–254 (DPTDPTFTSL…QLGESEEQNE (221 aa)) are Extracellular-facing. Ig-like V-type domains follow at residues 38–161 (PTFT…IHVP) and 162–256 (KAHG…NELV). Residues Asn-55, Asn-62, Asn-70, Asn-101, Asn-118, Asn-191, Asn-198, Asn-216, and Asn-221 are each glycosylated (N-linked (GlcNAc...) asparagine). 2 cysteine pairs are disulfide-bonded: Cys-89–Cys-145 and Cys-182–Cys-240. Residues 255-283 (LVVLSFLVPLKPFLAILAEVILLVAIILL) traverse the membrane as a helical segment. Topologically, residues 284–330 (CEVYTHKKKNDPDAGKEFEQIEQLKSDDSNGIENNVPRYRKTDSADQ) are cytoplasmic. A compositionally biased stretch (basic and acidic residues) spans 293–311 (NDPDAGKEFEQIEQLKSDD). Positions 293 to 330 (NDPDAGKEFEQIEQLKSDDSNGIENNVPRYRKTDSADQ) are disordered. Residue Ser-312 is modified to Phosphoserine.

As to quaternary structure, interacts with SLC16A1, SLC16A6 and SLC16A7. As to expression, only member of the immunoglobulin superfamily to be expressed in embryonal carcinoma cells, which resemble multipotential cells of early embryos.

It localises to the cell membrane. The protein localises to the synapse. Plays a role in targeting the monocarboxylate transporters SLC16A1, SLC16A6 and SLC16A7 to the cell membrane. Plays a role in the outgrowth of motoneurons and in the formation of neuromuscular junctions. Following muscle denervation, promotes nerve terminal sprouting and the formation of additional acetylcholine receptor clusters at synaptic sites without affecting terminal Schwann cell number or morphology. Delays the retraction of terminal sprouts following re-innervation of denervated endplates. In Mus musculus (Mouse), this protein is Embigin (Emb).